The following is a 207-amino-acid chain: Ribosomal RNA small subunit methyltransferase G (207 aa).

S-adenosyl-L-methionine is bound by residues Gly76, Gln81, 127–128 (VE), and Arg141.

It belongs to the methyltransferase superfamily. RNA methyltransferase RsmG family.

The protein localises to the cytoplasm. The catalysed reaction is guanosine(527) in 16S rRNA + S-adenosyl-L-methionine = N(7)-methylguanosine(527) in 16S rRNA + S-adenosyl-L-homocysteine. Its function is as follows. Specifically methylates the N7 position of guanine in position 527 of 16S rRNA. This Neisseria meningitidis serogroup A / serotype 4A (strain DSM 15465 / Z2491) protein is Ribosomal RNA small subunit methyltransferase G.